The primary structure comprises 468 residues: Ribosomal lysine N-methyltransferase 4 (468 aa).

Positions 22–302 (EKIGLNDYRH…KGEQLWNTYG (281 aa)) constitute an SET domain. The disordered stretch occupies residues 188-225 (ISNENEKSAAETSIKEDKNGDAAKKNEGSANQDDEKLH). Y301 is an S-adenosyl-L-methionine binding site.

It belongs to the class V-like SAM-binding methyltransferase superfamily. Histone-lysine methyltransferase family. SETD6 subfamily.

It localises to the nucleus. Its function is as follows. S-adenosyl-L-methionine-dependent protein-lysine N-methyltransferase that monomethylates 60S ribosomal protein L42 (rpl42) at 'Lys-55'. The chain is Ribosomal lysine N-methyltransferase 4 from Schizosaccharomyces pombe (strain 972 / ATCC 24843) (Fission yeast).